Here is an 89-residue protein sequence, read N- to C-terminus: Small ribosomal subunit protein uS15 (89 aa).

It belongs to the universal ribosomal protein uS15 family. In terms of assembly, part of the 30S ribosomal subunit. Forms a bridge to the 50S subunit in the 70S ribosome, contacting the 23S rRNA.

Functionally, one of the primary rRNA binding proteins, it binds directly to 16S rRNA where it helps nucleate assembly of the platform of the 30S subunit by binding and bridging several RNA helices of the 16S rRNA. Forms an intersubunit bridge (bridge B4) with the 23S rRNA of the 50S subunit in the ribosome. This is Small ribosomal subunit protein uS15 from Nitratidesulfovibrio vulgaris (strain DP4) (Desulfovibrio vulgaris).